Reading from the N-terminus, the 460-residue chain is Hydroxymethylglutaryl-CoA synthase MYCGRDRAFT_54740 (460 aa).

Ala-35 is a (3S)-3-hydroxy-3-methylglutaryl-CoA binding site. Glu-86 functions as the Proton donor/acceptor in the catalytic mechanism. (3S)-3-hydroxy-3-methylglutaryl-CoA contacts are provided by Cys-120, Asn-158, Thr-162, Ser-212, His-262, Lys-271, Asn-339, and Ser-373. The active-site Acyl-thioester intermediate is the Cys-120. Catalysis depends on His-262, which acts as the Proton donor/acceptor.

This sequence belongs to the thiolase-like superfamily. HMG-CoA synthase family.

The catalysed reaction is acetoacetyl-CoA + acetyl-CoA + H2O = (3S)-3-hydroxy-3-methylglutaryl-CoA + CoA + H(+). Its pathway is siderophore biosynthesis. In terms of biological role, hydroxymethylglutaryl-CoA synthase involved in the biosynthesis of a ferrichrome A-like siderophors which may contribute to organismal virulence. The first step of siderophore biosynthesis is performed by the HMG-CoA synthase (HMGS) MYCGRDRAFT_54740 which catalyzes the generation of HMG-CoA and CoA using acetoacetyl-CoA and acetyl-CoA as substrates. The enoyl-CoA isomerase/hydratase MYCGRDRAFT_76805 then catalyzes the conversion of HMG-CoA to methylglutaconyl-CoA. The acyltransferase MYCGRDRAFT_85486 then fuses methylglutaconyl-CoA with hydroxyornithine to yield methylglutaconyl hydroxyornithine. Methylglutaconyl hydroxyornithine is then available for use by the nonribosomal peptide synthetase NRPS2 to generate the ferrichrome A-like siderophore. In Zymoseptoria tritici (strain CBS 115943 / IPO323) (Speckled leaf blotch fungus), this protein is Hydroxymethylglutaryl-CoA synthase MYCGRDRAFT_54740 (ERG13).